Here is a 585-residue protein sequence, read N- to C-terminus: MSFEIPRRQYADLYGPTTGDKIRLADTELFLEIEKDLTVYGEEVVFGGGKVIRDGMGQNGQATRDEDIPDTVITNAVILDHSGIYKADVALRDGHIFRIGKAGNPQITDGVDIVIGASTEIIAGERKILTAGGIDTHIHFISPDQVATALTSGVTTMIGGGTGPAEGTKATTVTPGKWHIHRMLQAAEAFPMNIGLFGKGHASAVEPLAEQIRAGAIGLKVHEDWGSTTSSIDMSLTVADEYDVQVAIHTDTLNECGFVEDTIRAINGRVIHTFHTEGAGGGHAPDIIKIAGMPNVLPASTNPTLPYTRNTIEEHLDMLMVCHHLNPDIPEDVAFADSRIRAETIAAEDVLQDMGIFSITSSDSQAMGRVGEVITRTWQVADKMKKQRGILAADGGMDLGADGSASAHGSAGSDNFRLKRYVAKYTINPALAQGIADTVGSVEEGKFADLVLWDPAFFGVKPELVLKGGQIAYALMGDANASIPTPQPRTMRPMFGAFGKAVQQTSITFLSKAAIDAGVPEELGLEKLIRPVSGIRNLTKADLKYNDATPDIQVDPETYQVTVDGEDVTCEPADVLPMAQRYFLF.

In terms of domain architecture, Urease spans 132–585 (GGIDTHIHFI…LPMAQRYFLF (454 aa)). Residues histidine 137, histidine 139, and lysine 220 each coordinate Ni(2+). Lysine 220 is subject to N6-carboxylysine. Histidine 222 provides a ligand contact to substrate. Residues histidine 249 and histidine 275 each contribute to the Ni(2+) site. Residue histidine 323 is the Proton donor of the active site. Aspartate 363 contributes to the Ni(2+) binding site.

It belongs to the metallo-dependent hydrolases superfamily. Urease alpha subunit family. As to quaternary structure, heterotrimer of UreA (gamma), UreB (beta) and UreC (alpha) subunits. Three heterotrimers associate to form the active enzyme. It depends on Ni cation as a cofactor. In terms of processing, carboxylation allows a single lysine to coordinate two nickel ions.

The protein resides in the cytoplasm. It catalyses the reaction urea + 2 H2O + H(+) = hydrogencarbonate + 2 NH4(+). It participates in nitrogen metabolism; urea degradation; CO(2) and NH(3) from urea (urease route): step 1/1. This Pseudarthrobacter chlorophenolicus (strain ATCC 700700 / DSM 12829 / CIP 107037 / JCM 12360 / KCTC 9906 / NCIMB 13794 / A6) (Arthrobacter chlorophenolicus) protein is Urease subunit alpha.